The chain runs to 156 residues: Ribosome maturation factor RimP (156 aa).

The protein belongs to the RimP family.

It is found in the cytoplasm. In terms of biological role, required for maturation of 30S ribosomal subunits. The sequence is that of Ribosome maturation factor RimP from Prochlorococcus marinus (strain NATL2A).